A 140-amino-acid polypeptide reads, in one-letter code: Large ribosomal subunit protein uL11 (140 aa).

It belongs to the universal ribosomal protein uL11 family. Part of the ribosomal stalk of the 50S ribosomal subunit. Interacts with L10 and the large rRNA to form the base of the stalk. L10 forms an elongated spine to which L12 dimers bind in a sequential fashion forming a multimeric L10(L12)X complex. Post-translationally, one or more lysine residues are methylated.

Functionally, forms part of the ribosomal stalk which helps the ribosome interact with GTP-bound translation factors. The chain is Large ribosomal subunit protein uL11 from Dehalococcoides mccartyi (strain ATCC BAA-2266 / KCTC 15142 / 195) (Dehalococcoides ethenogenes (strain 195)).